Here is a 95-residue protein sequence, read N- to C-terminus: Aspartyl/glutamyl-tRNA(Asn/Gln) amidotransferase subunit C (95 aa).

It belongs to the GatC family. In terms of assembly, heterotrimer of A, B and C subunits.

The enzyme catalyses L-glutamyl-tRNA(Gln) + L-glutamine + ATP + H2O = L-glutaminyl-tRNA(Gln) + L-glutamate + ADP + phosphate + H(+). The catalysed reaction is L-aspartyl-tRNA(Asn) + L-glutamine + ATP + H2O = L-asparaginyl-tRNA(Asn) + L-glutamate + ADP + phosphate + 2 H(+). Allows the formation of correctly charged Asn-tRNA(Asn) or Gln-tRNA(Gln) through the transamidation of misacylated Asp-tRNA(Asn) or Glu-tRNA(Gln) in organisms which lack either or both of asparaginyl-tRNA or glutaminyl-tRNA synthetases. The reaction takes place in the presence of glutamine and ATP through an activated phospho-Asp-tRNA(Asn) or phospho-Glu-tRNA(Gln). In Cytophaga hutchinsonii (strain ATCC 33406 / DSM 1761 / CIP 103989 / NBRC 15051 / NCIMB 9469 / D465), this protein is Aspartyl/glutamyl-tRNA(Asn/Gln) amidotransferase subunit C.